Here is a 981-residue protein sequence, read N- to C-terminus: Proline-rich transmembrane protein 3 (981 aa).

Residues 1 to 27 (MASSPWGCVCGLLLLLLPLLGTGPALG) form the signal peptide. Residues 28–474 (RGFPRPLENS…RVLSFSWELH (447 aa)) are Extracellular-facing. Disordered regions lie at residues 43–107 (PGAH…GAQR) and 169–457 (PPSL…TAPP). Basic and acidic residues predominate over residues 65–85 (PRADSHRNSDVRHAPAEEMPE). Residues 297-302 (SWEVSS) are O-glycosylated at one site. O-linked (GalNAc...) serine glycosylation occurs at serine 329. The span at 331 to 340 (APDRPSKPER) shows a compositional bias: basic and acidic residues. Threonine 363 carries an O-linked (GalNAc...) threonine glycan. Asparagine 379 carries N-linked (GlcNAc...) asparagine glycosylation. The segment covering 411–427 (APSTSRRGLIRVTTQRA) has biased composition (polar residues). A compositionally biased stretch (low complexity) spans 437-457 (TASSMASAPASSPPANATAPP). Residues 475 to 495 (VYGVGVLFLLPALLALAALAA) traverse the membrane as a helical segment. Residues 496-501 (APAGPR) lie on the Cytoplasmic side of the membrane. The chain crosses the membrane as a helical span at residues 502–522 (LALVAAVLVLVASALRSAYML). Topologically, residues 523–542 (TDPYGSQARLGVRGGLVLYN) are extracellular. The chain crosses the membrane as a helical span at residues 543–563 (LPFPLLLTALAALTLLGLGAG). Residues 564 to 570 (LPPPLQN) are Cytoplasmic-facing. The helical transmembrane segment at 571–591 (PLLLGAVALVHGVGLLATDLL) threads the bilayer. Residues 592–598 (STWSVLN) are Extracellular-facing. The helical transmembrane segment at 599–619 (LLTQGLSCAWGAAVALGTLCL) threads the bilayer. The Cytoplasmic portion of the chain corresponds to 620-638 (CRRRLLDGPRGWDASPGPR). Residues 639 to 659 (LLAVAGALGLLASGLQLAAAL) form a helical membrane-spanning segment. The Extracellular segment spans residues 660-679 (WLYPGPGRVGRFSWAWWGVH). A helical transmembrane segment spans residues 680–700 (FWLRLLELTWALALALAAVAA). Residues 701-981 (ARPRPPTEHA…RSASSDTIEL (281 aa)) are Cytoplasmic-facing. The disordered stretch occupies residues 759-807 (AESGQLATPSSGAWGSAASLGRGPQGGPGLSRNGVGPAPSLSELDLRPP). Residues 765-780 (ATPSSGAWGSAASLGR) are compositionally biased toward low complexity. Serine 777 bears the Phosphoserine mark. Arginine 780 is modified (omega-N-methylarginine). 9 positions are modified to phosphoserine: serine 789, serine 798, serine 808, serine 815, serine 854, serine 874, serine 902, serine 903, and serine 911. The disordered stretch occupies residues 836–865 (LRGLASPPPGGALRPRRGSHPKAELDDAGS). The disordered stretch occupies residues 937–981 (TVQLLPAPTPAPDSTAARQGDGQGEVQPRGKPGESRSASSDTIEL). The span at 972–981 (RSASSDTIEL) shows a compositional bias: polar residues.

It is found in the membrane. The chain is Proline-rich transmembrane protein 3 (PRRT3) from Homo sapiens (Human).